The following is a 100-amino-acid chain: Small ribosomal subunit protein uS14c (100 aa).

The protein belongs to the universal ribosomal protein uS14 family. As to quaternary structure, part of the 30S ribosomal subunit.

It is found in the plastid. The protein localises to the chloroplast. Its function is as follows. Binds 16S rRNA, required for the assembly of 30S particles. The polypeptide is Small ribosomal subunit protein uS14c (Coffea arabica (Arabian coffee)).